A 358-amino-acid chain; its full sequence is Peptide chain release factor 1 (358 aa).

At Gln233 the chain carries N5-methylglutamine.

The protein belongs to the prokaryotic/mitochondrial release factor family. In terms of processing, methylated by PrmC. Methylation increases the termination efficiency of RF1.

The protein resides in the cytoplasm. Functionally, peptide chain release factor 1 directs the termination of translation in response to the peptide chain termination codons UAG and UAA. This is Peptide chain release factor 1 from Clostridium botulinum (strain ATCC 19397 / Type A).